Here is a 578-residue protein sequence, read N- to C-terminus: Putative ankyrin repeat protein FPV022 (578 aa).

ANK repeat units follow at residues 4-34 (RRKS…DLNK), 38-67 (KNRT…KMSA), 68-97 (CKVP…SVDV), 100-129 (KGET…SGPY), 160-189 (YGHT…ITDN), 222-251 (EGTT…DPKV), 255-287 (HSVS…MVNM), 320-349 (YLSE…NINK), 353-382 (YGNI…DVNA), 386-415 (DGNT…DINS), and 419-449 (NGRT…KKNK).

The sequence is that of Putative ankyrin repeat protein FPV022 from Fowlpox virus (strain NVSL) (FPV).